Here is a 366-residue protein sequence, read N- to C-terminus: ADP-ribosylarginine hydrolase Tri1 (366 aa).

The N-terminal extension stretch occupies residues Met1–Glu65. The ADP-ribosyl hydrolase domain stretch occupies residues Gly74–Phe366. Positions 116, 117, 118, 161, and 317 each coordinate Mg(2+).

This sequence belongs to the ADP-ribosylglycohydrolase family. In terms of assembly, forms a stable complex with cognate effector protein Tre1-Sp. Mg(2+) serves as cofactor.

It carries out the reaction N(omega)-(ADP-D-ribosyl)-L-arginyl-[protein] + H2O = ADP-D-ribose + L-arginyl-[protein]. Functionally, immunity component of a contact-dependent interbacterial competition system (also called effector-immunity systems). Acts as an arginine mono-ADP-ribosylhydrolase, mediating the removal of mono-ADP-ribose attached to arginine residues on proteins. De-ADP-ribosylates FtsZ, is able to act on other proteins as well. Neutralizes the toxic activity of cognate toxin Tre1-Sp. Expression of this protein alone in E.coli partially protects the cells against competition by wild-type S.proteamaculans. Neutralizes Tre1-Sp both by occluding its active site via its N-terminal extension and by hydrolyzing the ADP-ribosyl moiety from FtsZ; the 2 activities are dissociable by mutagenesis. This Serratia proteamaculans (strain 568) protein is ADP-ribosylarginine hydrolase Tri1.